Reading from the N-terminus, the 1357-residue chain is Major yolk protein (1357 aa).

The N-terminal stretch at 1-15 (MRAAILFCLVASSMA) is a signal peptide. Transferrin-like domains lie at 132-478 (VRWC…GEVY) and 493-1101 (AKIC…AIVK). 22 N-linked (GlcNAc...) asparagine glycosylation sites follow: Asn198, Asn227, Asn304, Asn310, Asn402, Asn499, Asn530, Asn541, Asn572, Asn578, Asn625, Asn639, Asn692, Asn732, Asn741, Asn1035, Asn1043, Asn1081, Asn1128, Asn1208, Asn1241, and Asn1258.

Belongs to the transferrin family. As to expression, synthesized in the intestines of the females and males and also in ovaries and testis.

It is found in the secreted. Functionally, may serve the following two functions: a classical role as a yolk protein precursor and probably shuttle iron to developing germ cells. The protein is Major yolk protein of Strongylocentrotus purpuratus (Purple sea urchin).